A 237-amino-acid polypeptide reads, in one-letter code: Corrinoid adenosyltransferase MMAB (237 aa).

The N-terminal 26 residues, 1–26 (MAVWLFGGRLGLRGRLSACRLLCPRF), are a transit peptide targeting the mitochondrion. The segment at 30–49 (GPQGGEDGDRLQPSSTAAKI) is disordered. ATP contacts are provided by residues 54–57 (TKTG), 62–63 (SS), and Lys-72. At Ser-128 the chain carries Phosphoserine. 184–188 (RRAER) serves as a coordination point for ATP. The residue at position 205 (Lys-205) is an N6-succinyllysine. Position 208 (Asn-208) interacts with ATP. Lys-224 bears the N6-acetyllysine; alternate mark. Lys-224 bears the N6-succinyllysine; alternate mark.

It belongs to the Cob(I)alamin adenosyltransferase family. In terms of assembly, homotrimer.

The protein resides in the mitochondrion. It catalyses the reaction cob(I)alamin-[corrinoid adenosyltransferase] + ATP = apo-[corrinoid adenosyltransferase] + adenosylcob(III)alamin + triphosphate. In terms of biological role, converts cob(I)alamin to adenosylcobalamin (adenosylcob(III)alamin), a coenzyme for methylmalonyl-CoA mutase, therefore participates in the final step of the vitamin B12 conversion. Generates adenosylcobalamin (AdoCbl) and directly delivers the cofactor to MUT in a transfer that is stimulated by ATP-binding to MMAB and gated by MMAA. This chain is Corrinoid adenosyltransferase MMAB, found in Mus musculus (Mouse).